We begin with the raw amino-acid sequence, 548 residues long: Rhodopsin kinase grk7-b (548 aa).

S33 carries the post-translational modification Phosphoserine; by PKA. Residues 53–172 enclose the RGS domain; the sequence is FEDICEQQPI…QTSLFFDRFV (120 aa). In terms of domain architecture, Protein kinase spans 187–446; that stretch reads FYEFRTLGKG…NDDPRKHEFF (260 aa). ATP is bound by residues 193 to 201 and K216; that span reads LGKGGFGEV. D312 (proton acceptor) is an active-site residue. Residues 447 to 512 form the AGC-kinase C-terminal domain; that stretch reads KSINFPRLEA…GVVPIAWQQE (66 aa). Positions 520–548 are disordered; it reads DELSDPNRKESAAGLEDEEQQKSKSCTLL. Position 545 is a cysteine methyl ester (C545). C545 carries the S-geranylgeranyl cysteine lipid modification. The propeptide at 546 to 548 is removed in mature form; that stretch reads TLL.

The protein belongs to the protein kinase superfamily. AGC Ser/Thr protein kinase family. GPRK subfamily. Post-translationally, phosphorylation at Ser-33 is regulated by light and activated by cAMP. As to expression, expressed in the eyes (at protein level). Expressed in the eyes, the pineal gland and in the brain.

Its subcellular location is the membrane. It carries out the reaction L-threonyl-[rhodopsin] + ATP = O-phospho-L-threonyl-[rhodopsin] + ADP + H(+). The enzyme catalyses L-seryl-[rhodopsin] + ATP = O-phospho-L-seryl-[rhodopsin] + ADP + H(+). Its function is as follows. Retina-specific kinase involved in the shutoff of the photoresponse and adaptation to changing light conditions via cone opsin phosphorylation, including rhodopsin (RHO). This Danio rerio (Zebrafish) protein is Rhodopsin kinase grk7-b (grk7b).